We begin with the raw amino-acid sequence, 215 residues long: Cytochrome b6 (215 aa).

A helical transmembrane segment spans residues 32–52 (IFYCLGGITLTCFIIQVATGF). Heme c is bound at residue Cys35. Heme b-binding residues include His86 and His100. The next 3 helical transmembrane spans lie at 90–110 (ASMMVLMMILHVFRVYLTGGF), 116–136 (LTWVTGVILGVLTVSFGVTGY), and 186–206 (LHTFVLPLLTAVFMLMHFLMI). Residues His187 and His202 each coordinate heme b.

Belongs to the cytochrome b family. PetB subfamily. As to quaternary structure, the 4 large subunits of the cytochrome b6-f complex are cytochrome b6, subunit IV (17 kDa polypeptide, PetD), cytochrome f and the Rieske protein, while the 4 small subunits are PetG, PetL, PetM and PetN. The complex functions as a dimer. The cofactor is heme b. Heme c serves as cofactor.

It localises to the plastid. It is found in the chloroplast thylakoid membrane. Its function is as follows. Component of the cytochrome b6-f complex, which mediates electron transfer between photosystem II (PSII) and photosystem I (PSI), cyclic electron flow around PSI, and state transitions. This chain is Cytochrome b6, found in Zygnema circumcarinatum (Green alga).